A 158-amino-acid chain; its full sequence is D-aminoacyl-tRNA deacylase (158 aa).

The short motif at 143–144 is the Gly-cisPro motif, important for rejection of L-amino acids element; sequence GP.

This sequence belongs to the DTD family. In terms of assembly, homodimer.

It is found in the cytoplasm. The catalysed reaction is glycyl-tRNA(Ala) + H2O = tRNA(Ala) + glycine + H(+). The enzyme catalyses a D-aminoacyl-tRNA + H2O = a tRNA + a D-alpha-amino acid + H(+). Its function is as follows. An aminoacyl-tRNA editing enzyme that deacylates mischarged D-aminoacyl-tRNAs. Also deacylates mischarged glycyl-tRNA(Ala), protecting cells against glycine mischarging by AlaRS. Acts via tRNA-based rather than protein-based catalysis; rejects L-amino acids rather than detecting D-amino acids in the active site. By recycling D-aminoacyl-tRNA to D-amino acids and free tRNA molecules, this enzyme counteracts the toxicity associated with the formation of D-aminoacyl-tRNA entities in vivo and helps enforce protein L-homochirality. The protein is D-aminoacyl-tRNA deacylase of Solidesulfovibrio magneticus (strain ATCC 700980 / DSM 13731 / RS-1) (Desulfovibrio magneticus).